A 160-amino-acid polypeptide reads, in one-letter code: Ribosomal RNA large subunit methyltransferase H (160 aa).

S-adenosyl-L-methionine contacts are provided by residues Gly108 and Phe127–Trp132.

It belongs to the RNA methyltransferase RlmH family. As to quaternary structure, homodimer.

The protein localises to the cytoplasm. It catalyses the reaction pseudouridine(1915) in 23S rRNA + S-adenosyl-L-methionine = N(3)-methylpseudouridine(1915) in 23S rRNA + S-adenosyl-L-homocysteine + H(+). Specifically methylates the pseudouridine at position 1915 (m3Psi1915) in 23S rRNA. The polypeptide is Ribosomal RNA large subunit methyltransferase H (Beijerinckia indica subsp. indica (strain ATCC 9039 / DSM 1715 / NCIMB 8712)).